A 217-amino-acid polypeptide reads, in one-letter code: Pyridoxine/pyridoxamine 5'-phosphate oxidase (217 aa).

Substrate contacts are provided by residues 13–16 (RRDY) and Lys-71. FMN-binding positions include 66–71 (RIVLLK), 81–82 (YT), Lys-88, and Gln-110. Substrate contacts are provided by Tyr-128, Arg-132, and Ser-136. Residues 145 to 146 (QS) and Trp-190 contribute to the FMN site. 196–198 (RLH) is a substrate binding site. Arg-200 is a binding site for FMN.

It belongs to the pyridoxamine 5'-phosphate oxidase family. Homodimer. The cofactor is FMN.

The catalysed reaction is pyridoxamine 5'-phosphate + O2 + H2O = pyridoxal 5'-phosphate + H2O2 + NH4(+). It catalyses the reaction pyridoxine 5'-phosphate + O2 = pyridoxal 5'-phosphate + H2O2. The protein operates within cofactor metabolism; pyridoxal 5'-phosphate salvage; pyridoxal 5'-phosphate from pyridoxamine 5'-phosphate: step 1/1. It functions in the pathway cofactor metabolism; pyridoxal 5'-phosphate salvage; pyridoxal 5'-phosphate from pyridoxine 5'-phosphate: step 1/1. Functionally, catalyzes the oxidation of either pyridoxine 5'-phosphate (PNP) or pyridoxamine 5'-phosphate (PMP) into pyridoxal 5'-phosphate (PLP). This Edwardsiella ictaluri (strain 93-146) protein is Pyridoxine/pyridoxamine 5'-phosphate oxidase.